A 213-amino-acid polypeptide reads, in one-letter code: Vacuolar protein sorting-associated protein 32 homolog 1 (213 aa).

Coiled coils occupy residues 11-42 (KQETSTLQTLDKLNETLEMLEKKENVLLKKAT) and 118-176 (TNID…QLLQ). Residues 180-213 (IHVPQGNKPARAPAQKQPTAEEDELAALQAEMAL) are disordered.

It belongs to the SNF7 family. Component of the endosomal sorting required for transport complex III (ESCRT-III), composed at least of VPS2, VPS20, VPS24 and VPS32. Interacts with SKD1. Interacts with BRO1/ALIX.

The protein localises to the endosome. Its function is as follows. Component of the ESCRT-III complex, which is required for multivesicular bodies (MVBs) formation and sorting of endosomal cargo proteins into MVBs. The ESCRT-III complex is probably involved in the concentration of MVB cargo. The protein is Vacuolar protein sorting-associated protein 32 homolog 1 (VPS32.1) of Arabidopsis thaliana (Mouse-ear cress).